Here is a 377-residue protein sequence, read N- to C-terminus: Naringenin,2-oxoglutarate 3-dioxygenase (377 aa).

The 105-residue stretch at C193–P297 folds into the Fe2OG dioxygenase domain. H220, D222, and H278 together coordinate Fe cation. R288 is a 2-oxoglutarate binding site.

The protein belongs to the iron/ascorbate-dependent oxidoreductase family. It depends on Fe(2+) as a cofactor. L-ascorbate is required as a cofactor.

It catalyses the reaction a (2S)-flavan-4-one + 2-oxoglutarate + O2 = a (2R,3R)-dihydroflavonol + succinate + CO2. The protein operates within secondary metabolite biosynthesis; flavonoid biosynthesis. Functionally, catalyzes the 3-beta-hydroxylation of 2S-flavanones to 2R,3R-dihydroflavonols which are intermediates in the biosynthesis of flavonols, anthocyanidins, catechins and proanthocyanidins in plants. This chain is Naringenin,2-oxoglutarate 3-dioxygenase, found in Hordeum vulgare (Barley).